We begin with the raw amino-acid sequence, 89 residues long: Large ribosomal subunit protein bL27 (89 aa).

Residues 1–26 (MAHKKAGGSSKNGRDSNAQRRGVKRF) form a disordered region.

Belongs to the bacterial ribosomal protein bL27 family.

The sequence is that of Large ribosomal subunit protein bL27 from Maridesulfovibrio salexigens (strain ATCC 14822 / DSM 2638 / NCIMB 8403 / VKM B-1763) (Desulfovibrio salexigens).